Consider the following 361-residue polypeptide: Putative agmatine deiminase (361 aa).

The active-site Amidino-cysteine intermediate is cysteine 354.

The protein belongs to the agmatine deiminase family.

It catalyses the reaction agmatine + H2O = N-carbamoylputrescine + NH4(+). The sequence is that of Putative agmatine deiminase from Streptococcus pneumoniae (strain 70585).